The chain runs to 197 residues: Probable nicotinate-nucleotide adenylyltransferase (197 aa).

It belongs to the NadD family.

The enzyme catalyses nicotinate beta-D-ribonucleotide + ATP + H(+) = deamido-NAD(+) + diphosphate. The protein operates within cofactor biosynthesis; NAD(+) biosynthesis; deamido-NAD(+) from nicotinate D-ribonucleotide: step 1/1. In terms of biological role, catalyzes the reversible adenylation of nicotinate mononucleotide (NaMN) to nicotinic acid adenine dinucleotide (NaAD). The chain is Probable nicotinate-nucleotide adenylyltransferase from Leptospira borgpetersenii serovar Hardjo-bovis (strain JB197).